We begin with the raw amino-acid sequence, 863 residues long: Protein translocase subunit SecA (863 aa).

ATP is bound by residues Gln88, 106-110 (GEGKT), and Asp507. The tract at residues 806 to 863 (KSHEQNEQFLSNTTESGVNENGEAQITKVPRNSPCPCGSGKKYKECHGKSGPKKGILA) is disordered. Residues 812–829 (EQFLSNTTESGVNENGEA) show a composition bias toward polar residues. Zn(2+) contacts are provided by Cys840, Cys842, Cys851, and His852.

This sequence belongs to the SecA family. As to quaternary structure, monomer and homodimer. Part of the essential Sec protein translocation apparatus which comprises SecA, SecYEG and auxiliary proteins SecDF-YajC and YidC. The cofactor is Zn(2+).

Its subcellular location is the cell inner membrane. The protein localises to the cytoplasm. It catalyses the reaction ATP + H2O + cellular proteinSide 1 = ADP + phosphate + cellular proteinSide 2.. Functionally, part of the Sec protein translocase complex. Interacts with the SecYEG preprotein conducting channel. Has a central role in coupling the hydrolysis of ATP to the transfer of proteins into and across the cell membrane, serving as an ATP-driven molecular motor driving the stepwise translocation of polypeptide chains across the membrane. The polypeptide is Protein translocase subunit SecA (Campylobacter lari (strain RM2100 / D67 / ATCC BAA-1060)).